A 238-amino-acid chain; its full sequence is MKYLLPTAAAGLLLLAAQPAMAANTGGYATTDGGEVSGAVKKTARSMKEIVDIIEAAQVDSKGKKVKGGAYPLIITYSGNEDSLIKAAEKNICGQWSKDARGVQIKEFTKGTYYPGHQWLIRQLRCLDCETLLTLWYVICALAICQAARKHGDAIRIDNSPNVWIDHNEIFAKNFECKGTPDNDTTFESAVDIKKGSTNVTVSVSVKEVGTLVNLSRLFFPFRIQRYRAFRLPVSCLP.

A signal peptide spans 1–22; the sequence is MKYLLPTAAAGLLLLAAQPAMA. Ca(2+)-binding residues include Asp153, Glu188, and Asp192.

The protein belongs to the polysaccharide lyase 1 family. Ca(2+) is required as a cofactor.

It catalyses the reaction Eliminative cleavage of (1-&gt;4)-alpha-D-galacturonan to give oligosaccharides with 4-deoxy-alpha-D-galact-4-enuronosyl groups at their non-reducing ends.. The protein operates within glycan metabolism; pectin degradation; 2-dehydro-3-deoxy-D-gluconate from pectin: step 2/5. Its function is as follows. Involved in maceration and soft-rotting of plant tissue. This is Putative pectate lyase X (PEL X) from Pectobacterium carotovorum (Erwinia carotovora).